The following is a 108-amino-acid chain: TYRO protein tyrosine kinase-binding protein (108 aa).

An N-terminal signal peptide occupies residues 1 to 25 (MEGLRPSDRLLSLLLTVGGLSLVLA). The Extracellular segment spans residues 26 to 36 (QSECNCSSVSP). The chain crosses the membrane as a helical span at residues 37-57 (GVLAGIVLGDLMLTLLIALAV). D46 is a binding site for Ca(2+). Residues 58-108 (YYLGRLVPRGRGATEVTRKQHIPETESPYQELQGQRTDVYSDLNTQRPYYK) are Cytoplasmic-facing. The segment at 71 to 108 (TEVTRKQHIPETESPYQELQGQRTDVYSDLNTQRPYYK) is disordered. An ITAM domain is found at 75–103 (RKQHIPETESPYQELQGQRTDVYSDLNTQ). Over residues 84-108 (SPYQELQGQRTDVYSDLNTQRPYYK) the composition is skewed to polar residues. A phosphotyrosine mark is found at Y86 and Y97.

The protein belongs to the TYROBP family. In terms of assembly, homodimer; disulfide-linked. Homotrimer; disulfide-linked. Homotetramer; disulfide-linked. Homotrimers and homotetramers form when low levels of partner receptors are available and is competitive with assembly with interacting receptors. They may represent alternative oligomerization states or may be intermediates in the receptor assembly process. Binding of a metal cation aids in homooligomerization through coordination of the metal ion by the subunits of the oligomer. Interacts with TREM1. Interacts with TREM2. Interacts with CLECSF5. Interacts with CD300LB and CD300C2. Interacts with CD300E. Interacts (via ITAM domain) with SYK (via SH2 domains); activates SYK mediating neutrophils and macrophages integrin-mediated activation. Interacts with KLRC2. Interacts with CD300H. Interacts with KLRD1. Interacts with SIGLEC1. Following ligand binding by associated receptors, tyrosine phosphorylated in the ITAM domain which leads to activation of additional tyrosine kinases and subsequent cell activation.

It is found in the cell membrane. Adapter protein which non-covalently associates with activating receptors found on the surface of a variety of immune cells to mediate signaling and cell activation following ligand binding by the receptors. TYROBP is tyrosine-phosphorylated in the ITAM domain following ligand binding by the associated receptors which leads to activation of additional tyrosine kinases and subsequent cell activation. Also has an inhibitory role in some cells. Non-covalently associates with activating receptors of the CD300 family to mediate cell activation. Also mediates cell activation through association with activating receptors of the CD200R family. Required for neutrophil activation mediated by integrin. Required for the activation of myeloid cells mediated by the CLEC5A/MDL1 receptor. Associates with natural killer (NK) cell receptors such as the KLRD1/KLRC2 heterodimer to mediate NK cell activation. Associates with TREM1 to mediate activation of neutrophils and monocytes. Associates with TREM2 on monocyte-derived dendritic cells to mediate up-regulation of chemokine receptor CCR7 and dendritic cell maturation and survival. Association with TREM2 mediates cytokine-induced formation of multinucleated giant cells which are formed by the fusion of macrophages. Stabilizes the TREM2 C-terminal fragment (TREM2-CTF) produced by TREM2 ectodomain shedding which suppresses the release of pro-inflammatory cytokines. In microglia, required with TREM2 for phagocytosis of apoptotic neurons. Required with ITGAM/CD11B in microglia to control production of microglial superoxide ions which promote the neuronal apoptosis that occurs during brain development. Promotes pro-inflammatory responses in microglia following nerve injury which accelerates degeneration of injured neurons. Positively regulates the expression of the IRAK3/IRAK-M kinase and IL10 production by liver dendritic cells and inhibits their T cell allosimulatory ability. Negatively regulates B cell proliferation. Required for CSF1-mediated osteoclast cytoskeletal organization. Positively regulates multinucleation during osteoclast development. This chain is TYRO protein tyrosine kinase-binding protein, found in Bos taurus (Bovine).